We begin with the raw amino-acid sequence, 727 residues long: Capsid protein VP1 (727 aa).

Residues 1 to 10 are compositionally biased toward basic residues; that stretch reads MAPPAKRARR. Disordered stretches follow at residues 1–38, 95–120, and 141–184; these read MAPP…SDAA, VLTD…PPPH, and LAPM…VGIS. A Nuclear localization signal motif is present at residues 4 to 13; it reads PAKRARRGLV. The phospholipase A2-like stretch occupies residues 19–64; the sequence is YLGPGNSLDQGEPTNPSDAAAKEHDEAYAAYLRSGKNPYLYFSPAD. The span at 25-35 shows a compositional bias: polar residues; it reads SLDQGEPTNPS. Over residues 166 to 183 the composition is skewed to gly residues; that stretch reads SGNGSGGGGGGGSGGVGI. Residue Asn-323 participates in Mg(2+) binding. The cysteines at positions 633 and 637 are disulfide-linked.

It belongs to the parvoviridae capsid protein family. As to quaternary structure, interacts with host TFRC.

Its subcellular location is the virion. The protein resides in the host nucleus. Its function is as follows. Capsid protein self-assembles to form an icosahedral capsid with a T=1 symmetry, about 22 nm in diameter, and consisting of 60 copies of two size variants of the capsid proteins, VP1 and VP2, which differ by the presence of an N-terminal extension in the minor protein VP1. The capsid encapsulates the genomic ssDNA. Capsid proteins are responsible for the attachment to host cell receptors. This attachment induces virion internalization predominantly through clathrin-dependent endocytosis. Binding to the host receptors also induces capsid rearrangements leading to surface exposure of VP1 N-terminus, specifically its phospholipase A2-like region and putative nuclear localization signal(s). VP1 N-terminus might serve as a lipolytic enzyme to breach the endosomal membrane during entry into host cell and might contribute to virus transport to the nucleus. The protein is Capsid protein VP1 of Feline panleukopenia virus (strain 193) (FPV).